Here is a 245-residue protein sequence, read N- to C-terminus: Type III pantothenate kinase (245 aa).

Residue 6 to 13 (DQGNTILK) participates in ATP binding. Substrate-binding positions include Y86 and 93 to 96 (GTDR). The Proton acceptor role is filled by D95. A K(+)-binding site is contributed by D116. T119 contacts ATP. T171 contacts substrate.

It belongs to the type III pantothenate kinase family. As to quaternary structure, homodimer. NH4(+) serves as cofactor. Requires K(+) as cofactor.

The protein localises to the cytoplasm. It catalyses the reaction (R)-pantothenate + ATP = (R)-4'-phosphopantothenate + ADP + H(+). It participates in cofactor biosynthesis; coenzyme A biosynthesis; CoA from (R)-pantothenate: step 1/5. Its function is as follows. Catalyzes the phosphorylation of pantothenate (Pan), the first step in CoA biosynthesis. The chain is Type III pantothenate kinase from Azobacteroides pseudotrichonymphae genomovar. CFP2.